We begin with the raw amino-acid sequence, 467 residues long: tRNA-2-methylthio-N(6)-dimethylallyladenosine synthase (467 aa).

The MTTase N-terminal domain occupies 2–118; that stretch reads PSVFIKTFGC…VAEIADNLLK (117 aa). Positions 11, 47, 81, 159, 163, and 166 each coordinate [4Fe-4S] cluster. In terms of domain architecture, Radical SAM core spans 145-379; sequence TKAQPIAYVS…LEIQNKITME (235 aa). One can recognise a TRAM domain in the interval 382–445; the sequence is QKWVGQVVEI…GHTFYGTPLI (64 aa).

It belongs to the methylthiotransferase family. MiaB subfamily. As to quaternary structure, monomer. The cofactor is [4Fe-4S] cluster.

The protein resides in the cytoplasm. It carries out the reaction N(6)-dimethylallyladenosine(37) in tRNA + (sulfur carrier)-SH + AH2 + 2 S-adenosyl-L-methionine = 2-methylsulfanyl-N(6)-dimethylallyladenosine(37) in tRNA + (sulfur carrier)-H + 5'-deoxyadenosine + L-methionine + A + S-adenosyl-L-homocysteine + 2 H(+). Its function is as follows. Catalyzes the methylthiolation of N6-(dimethylallyl)adenosine (i(6)A), leading to the formation of 2-methylthio-N6-(dimethylallyl)adenosine (ms(2)i(6)A) at position 37 in tRNAs that read codons beginning with uridine. This is tRNA-2-methylthio-N(6)-dimethylallyladenosine synthase from Methylacidiphilum infernorum (isolate V4) (Methylokorus infernorum (strain V4)).